Consider the following 1333-residue polypeptide: Elongator complex protein 1 (1333 aa).

Residues S805, S1172, and S1175 each carry the phosphoserine modification. The interval 886 to 1333 (VDVNELFNHS…RSQWKLSLLE (448 aa)) is mediates dimerization. The tract at residues 1175–1209 (SGSEMSGRYSHSNSRISARSSKNRRKAERKKHSLK) is disordered. The interval 1192–1210 (ARSSKNRRKAERKKHSLKE) is required for binding to tRNA. The segment covering 1195 to 1207 (SKNRRKAERKKHS) has biased composition (basic residues).

Belongs to the ELP1/IKA1 family. As to quaternary structure, homodimer; dimerization promotes ELP1 stability and elongator complex formation. Component of the elongator complex which consists of ELP1, ELP2, ELP3, ELP4, ELP5 and ELP6. Interacts preferentially with MAP3K14/NIK followed by IKK-alpha and IKK-beta. Phosphorylated. As to expression, in the testis, expression is restricted to germ cells during spermatogenesis with no expression detected in somatic cells such as Sertoli cells or Leydig cells (at protein level). In the ovary, expressed in oocytes of primary, secondary and antral follicles (at protein level). Widely expressed in adult tissues with highest levels in brain and also expressed at all embryonic stages.

The protein resides in the cytoplasm. The protein localises to the nucleus. It functions in the pathway tRNA modification; 5-methoxycarbonylmethyl-2-thiouridine-tRNA biosynthesis. Its function is as follows. Component of the elongator complex which is required for multiple tRNA modifications, including mcm5U (5-methoxycarbonylmethyl uridine), mcm5s2U (5-methoxycarbonylmethyl-2-thiouridine), and ncm5U (5-carbamoylmethyl uridine). The elongator complex catalyzes the formation of carboxymethyluridine in the wobble base at position 34 in tRNAs. Regulates the migration and branching of projection neurons in the developing cerebral cortex, through a process depending on alpha-tubulin acetylation. ELP1 binds to tRNA, mediating interaction of the elongator complex with tRNA. May act as a scaffold protein that assembles active IKK-MAP3K14 complexes (IKKA, IKKB and MAP3K14/NIK). This is Elongator complex protein 1 (Elp1) from Mus musculus (Mouse).